The chain runs to 1792 residues: Eukaryotic translation initiation factor 4G (1792 aa).

The span at 1-12 (MSQRGDRGEGHA) shows a compositional bias: basic and acidic residues. 11 disordered regions span residues 1–285 (MSQR…PRPP), 424–446 (DSSG…TYGS), 491–590 (SPSM…PTPV), 612–659 (NSVP…EDLK), 678–761 (GVNK…NESH), 874–912 (VASE…EITR), 960–993 (SSSI…LDDW), 999–1018 (MSTP…EANG), 1275–1299 (GERE…EERE), 1407–1503 (WQQR…HRTT), and 1537–1600 (ELSS…KLYS). Residues 21-42 (FGGGHRGGGGVGGAGKGGGGSS) show a composition bias toward gly residues. The span at 88–107 (PLRPPAPQNAPAHVPVPAPR) shows a compositional bias: pro residues. Composition is skewed to polar residues over residues 147-156 (RISSTSTSQG) and 179-191 (STMQ…SSAP). Composition is skewed to low complexity over residues 216-243 (PQAP…PLQQ), 263-278 (PSQV…SVPN), and 432-442 (PSVQQQSQPVS). The span at 491–517 (SPSMNTGPGSNKDNLAGSTTSGHSQVT) shows a compositional bias: polar residues. Composition is skewed to basic and acidic residues over residues 545 to 564 (DVNK…KDNE), 571 to 587 (KSGE…EKHP), and 633 to 643 (DSNKNATKDTR). A compositionally biased stretch (polar residues) spans 644–654 (NLSQEPQSASS). Over residues 699–718 (AADASSIDRSSARSTSESTE) the composition is skewed to low complexity. A compositionally biased stretch (basic and acidic residues) spans 964 to 990 (ADHELPDESSEKEVNMGEDEGKKKVEL). The interval 1018-1030 (GRKRYSRDFLLTL) is EIF4E-binding. One can recognise an MIF4G domain in the interval 1183–1406 (QRQLKAILNK…RDSIDLRKNK (224 aa)). Residues 1278–1289 (EEAEADKTEEEG) are compositionally biased toward acidic residues. Basic and acidic residues-rich tracts occupy residues 1290–1299 (EIKQTKEERE) and 1411–1432 (RKVE…ERHA). Composition is skewed to low complexity over residues 1439 to 1450 (RGSVVGSGPRRG) and 1461 to 1470 (SAAALASPSS). 2 stretches are compositionally biased toward basic and acidic residues: residues 1490 to 1503 (IRFE…HRTT) and 1559 to 1572 (AREE…DRSG). The span at 1576–1593 (PNTQFAGPSNRPASQEGR) shows a compositional bias: polar residues. An MI domain is found at 1603 to 1727 (DLREKSISAI…SLQEVGTLIE (125 aa)).

The protein belongs to the eukaryotic initiation factor 4G family. As to quaternary structure, EIF4F is a multi-subunit complex, the composition of which varies with external and internal environmental conditions. It is composed of at least EIF4A, EIF4E and EIF4G. In higher plants two isoforms of EIF4F have been identified, named isoform EIF4F and isoform EIF(iso)4F. Isoform EIF4F has subunits p220 and p26, whereas isoform EIF(iso)4F has subunits p82 and p28.

Functionally, component of the protein complex eIF4F, which is involved in the recognition of the mRNA cap, ATP-dependent unwinding of 5'-terminal secondary structure and recruitment of mRNA to the ribosome. The chain is Eukaryotic translation initiation factor 4G from Oryza sativa subsp. japonica (Rice).